We begin with the raw amino-acid sequence, 112 residues long: UPF0060 membrane protein Arth_4238 (112 aa).

Transmembrane regions (helical) follow at residues 7–27, 33–53, 62–82, and 88–108; these read ILLF…VWQA, EWWW…AATL, ILAA…MVFD, and RWDI…MFAP.

The protein belongs to the UPF0060 family.

The protein resides in the cell membrane. The sequence is that of UPF0060 membrane protein Arth_4238 from Arthrobacter sp. (strain FB24).